A 267-amino-acid chain; its full sequence is Phosphatidylglycerol--prolipoprotein diacylglyceryl transferase (267 aa).

4 helical membrane-spanning segments follow: residues valine 10 to phenylalanine 30, leucine 54 to tyrosine 74, tryptophan 90 to phenylalanine 110, and leucine 116 to glycine 136. Arginine 137 is an a 1,2-diacyl-sn-glycero-3-phospho-(1'-sn-glycerol) binding site. The next 3 membrane-spanning stretches (helical) occupy residues proline 169–valine 189, glycine 197–valine 217, and tryptophan 231–valine 251.

It belongs to the Lgt family.

Its subcellular location is the cell inner membrane. The enzyme catalyses L-cysteinyl-[prolipoprotein] + a 1,2-diacyl-sn-glycero-3-phospho-(1'-sn-glycerol) = an S-1,2-diacyl-sn-glyceryl-L-cysteinyl-[prolipoprotein] + sn-glycerol 1-phosphate + H(+). It functions in the pathway protein modification; lipoprotein biosynthesis (diacylglyceryl transfer). Its function is as follows. Catalyzes the transfer of the diacylglyceryl group from phosphatidylglycerol to the sulfhydryl group of the N-terminal cysteine of a prolipoprotein, the first step in the formation of mature lipoproteins. The chain is Phosphatidylglycerol--prolipoprotein diacylglyceryl transferase from Chromohalobacter salexigens (strain ATCC BAA-138 / DSM 3043 / CIP 106854 / NCIMB 13768 / 1H11).